Here is a 149-residue protein sequence, read N- to C-terminus: Large ribosomal subunit protein bL9 (149 aa).

This sequence belongs to the bacterial ribosomal protein bL9 family.

In terms of biological role, binds to the 23S rRNA. The sequence is that of Large ribosomal subunit protein bL9 from Thermotoga maritima (strain ATCC 43589 / DSM 3109 / JCM 10099 / NBRC 100826 / MSB8).